A 143-amino-acid polypeptide reads, in one-letter code: Hemoglobin subunit alpha (143 aa).

At serine 2 the chain carries N-acetylserine. One can recognise a Globin domain in the interval 2–143; that stretch reads SLSDKDKSAV…VALALAEKYR (142 aa). Residue histidine 60 coordinates O2. Residue histidine 89 coordinates heme b.

Belongs to the globin family. Heterotetramer of two alpha chains and two beta chains. Red blood cells.

Involved in oxygen transport from gills to the various peripheral tissues. The chain is Hemoglobin subunit alpha (hba) from Pogonophryne scotti (Saddleback plunderfish).